The primary structure comprises 171 residues: Co-chaperone protein HscB homolog (171 aa).

In terms of domain architecture, J spans 2 to 74; that stretch reads NHFELFGLPN…VSRAEYILSE (73 aa).

Belongs to the HscB family. As to quaternary structure, interacts with HscA and stimulates its ATPase activity.

Functionally, co-chaperone involved in the maturation of iron-sulfur cluster-containing proteins. Seems to help targeting proteins to be folded toward HscA. This Aliivibrio fischeri (strain ATCC 700601 / ES114) (Vibrio fischeri) protein is Co-chaperone protein HscB homolog.